A 184-amino-acid polypeptide reads, in one-letter code: Large ribosomal subunit protein eL13 (184 aa).

Positions 28-53 (PARKERRRQARKAKAQRIAPRPASGP) are disordered. Positions 31 to 42 (KERRRQARKAKA) are enriched in basic residues.

It belongs to the eukaryotic ribosomal protein eL13 family.

This chain is Large ribosomal subunit protein eL13 (RPL13), found in Schistosoma mansoni (Blood fluke).